We begin with the raw amino-acid sequence, 548 residues long: Druantia protein DruB (548 aa).

The protein localises to the cytoplasm. In terms of biological role, component of antiviral defense system Druantia type I, composed of DruA, DruB, DruC, DruD and DruE. Expression of Druantia in E.coli (strain MG1655) confers resistance to phage lambda, SECphi18, SECphi27 and T4. This chain is Druantia protein DruB, found in Escherichia coli (strain UMEA 4076-1).